The following is a 605-amino-acid chain: Apoptosis-inducing factor 3 (605 aa).

Residues 22–45 (KERGKEELSASGKGSPRAYQGNGT) are disordered. The Rieske domain maps to 70 to 165 (AAVCHVKDLE…VKIEKEKVYV (96 aa)). Residues Cys-109, His-111, Cys-128, and His-131 each coordinate [2Fe-2S] cluster. FAD contacts are provided by residues 201-205 (GAGAA), Arg-235, Lys-240, Val-270, Asp-467, and Trp-514.

This sequence belongs to the FAD-dependent oxidoreductase family. In terms of tissue distribution, ubiquitous. Expressed in bone marrow, cerebral cortex, liver, ovary, thymus, thyroid gland and tongue (at protein level).

It localises to the mitochondrion. Induces apoptosis through a caspase dependent pathway. Reduces mitochondrial membrane potential. This is Apoptosis-inducing factor 3 (AIFM3) from Homo sapiens (Human).